The sequence spans 129 residues: Capsid protein (129 aa).

The tract at residues 31–104 (EWISSNSRSQ…FATNSDCELI (74 aa)) is viral RNA-binding.

It belongs to the Leviviricetes capsid protein family. As to quaternary structure, homodimer. The capsid proteins form dimers that assemble by group of 5. Twelve such pentamers are linked together with free dimers. The homodimers binds to the viral RNA via an operator hairpin, but also to many other RNA sequences in the viral genome; this interaction probably shifts the virus from the replicative to the assembly phase and ensures specific encapsidation of the viral genome.

It localises to the virion. Capsid protein self-assembles to form an icosahedral capsid with a T=3 symmetry, about 26 nm in diameter, and consisting of 89 capsid proteins dimers (178 capsid proteins). Involved in viral genome encapsidation through the interaction between a capsid protein dimer and the multiple packaging signals present in the RNA genome. The capsid also contains 1 copy of the A2 maturation protein. In terms of biological role, acts as a translational repressor of viral replicase synthesis late in infection. This latter function is the result of capsid protein interaction with an RNA hairpin which contains the replicase ribosome-binding site. This Enterobacteria phage f2 (Bacteriophage f2) protein is Capsid protein.